A 420-amino-acid polypeptide reads, in one-letter code: Phosphoribosylamine--glycine ligase (420 aa).

The region spanning 108–314 (KQFMEKYAIP…FAALIDALLH (207 aa)) is the ATP-grasp domain. Position 134 to 195 (134 to 195 (LNERGVPIVI…EDFLAGEEFS (62 aa))) interacts with ATP. Residues glutamate 284 and asparagine 286 each coordinate Mg(2+).

It belongs to the GARS family. Mg(2+) is required as a cofactor. Mn(2+) serves as cofactor.

It carries out the reaction 5-phospho-beta-D-ribosylamine + glycine + ATP = N(1)-(5-phospho-beta-D-ribosyl)glycinamide + ADP + phosphate + H(+). It participates in purine metabolism; IMP biosynthesis via de novo pathway; N(1)-(5-phospho-D-ribosyl)glycinamide from 5-phospho-alpha-D-ribose 1-diphosphate: step 2/2. The protein is Phosphoribosylamine--glycine ligase of Listeria monocytogenes serovar 1/2a (strain ATCC BAA-679 / EGD-e).